The chain runs to 1847 residues: Cilia- and flagella-associated protein 65 (1847 aa).

A helical transmembrane segment spans residues 112–132 (FFTIIPQPIFLSPGITLTLPI). Positions 805 to 914 (DLKLDTHKSI…VHYRIRLVGM (110 aa)) constitute an MSP domain. The stretch at 1457–1483 (QRELMRQYHKELQEWNEEKARQEVEFT) forms a coiled coil. The segment at 1668 to 1721 (YEGRKSKEQEEDLFGKMPGGQEDDEEEEEDEEEAEEEEEEIEEEMSKDEEDIDK) is disordered. Residues 1688–1720 (QEDDEEEEEDEEEAEEEEEEIEEEMSKDEEDID) show a composition bias toward acidic residues.

Belongs to the CFAP65 family. As to quaternary structure, interacts with CFAP47. Predominantly expressed in testis. Highly expressed in round and elongating spermatids. Expressed also in certain ciliated organs, such as the brain, lung and kidney.

Its subcellular location is the cell projection. The protein resides in the cilium. The protein localises to the flagellum membrane. It localises to the cytoplasmic vesicle. It is found in the secretory vesicle. Its subcellular location is the acrosome membrane. The protein resides in the cytoplasm. Functionally, plays a role in flagellar formation and sperm motility. This chain is Cilia- and flagella-associated protein 65, found in Mus musculus (Mouse).